The chain runs to 426 residues: Serine--tRNA ligase (426 aa).

233-235 (TAE) is a binding site for L-serine. 264 to 266 (RSE) provides a ligand contact to ATP. Residue Glu-287 participates in L-serine binding. Residue 351–354 (EISS) participates in ATP binding. Ser-387 contributes to the L-serine binding site.

The protein belongs to the class-II aminoacyl-tRNA synthetase family. Type-1 seryl-tRNA synthetase subfamily. Homodimer. The tRNA molecule binds across the dimer.

The protein localises to the cytoplasm. The catalysed reaction is tRNA(Ser) + L-serine + ATP = L-seryl-tRNA(Ser) + AMP + diphosphate + H(+). The enzyme catalyses tRNA(Sec) + L-serine + ATP = L-seryl-tRNA(Sec) + AMP + diphosphate + H(+). It participates in aminoacyl-tRNA biosynthesis; selenocysteinyl-tRNA(Sec) biosynthesis; L-seryl-tRNA(Sec) from L-serine and tRNA(Sec): step 1/1. Catalyzes the attachment of serine to tRNA(Ser). Is also able to aminoacylate tRNA(Sec) with serine, to form the misacylated tRNA L-seryl-tRNA(Sec), which will be further converted into selenocysteinyl-tRNA(Sec). This chain is Serine--tRNA ligase, found in Pseudomonas syringae pv. syringae (strain B728a).